A 120-amino-acid chain; its full sequence is Large ribosomal subunit protein uL18 (120 aa).

It belongs to the universal ribosomal protein uL18 family. In terms of assembly, part of the 50S ribosomal subunit; part of the 5S rRNA/L5/L18/L25 subcomplex. Contacts the 5S and 23S rRNAs.

Functionally, this is one of the proteins that bind and probably mediate the attachment of the 5S RNA into the large ribosomal subunit, where it forms part of the central protuberance. The protein is Large ribosomal subunit protein uL18 of Rhodospirillum centenum (strain ATCC 51521 / SW).